Consider the following 250-residue polypeptide: Ubiquinone/menaquinone biosynthesis C-methyltransferase UbiE (250 aa).

S-adenosyl-L-methionine-binding positions include Ser-73, Asp-94, and 122–123 (NA).

The protein belongs to the class I-like SAM-binding methyltransferase superfamily. MenG/UbiE family.

It carries out the reaction a 2-demethylmenaquinol + S-adenosyl-L-methionine = a menaquinol + S-adenosyl-L-homocysteine + H(+). It catalyses the reaction a 2-methoxy-6-(all-trans-polyprenyl)benzene-1,4-diol + S-adenosyl-L-methionine = a 5-methoxy-2-methyl-3-(all-trans-polyprenyl)benzene-1,4-diol + S-adenosyl-L-homocysteine + H(+). Its pathway is quinol/quinone metabolism; menaquinone biosynthesis; menaquinol from 1,4-dihydroxy-2-naphthoate: step 2/2. It participates in cofactor biosynthesis; ubiquinone biosynthesis. Its function is as follows. Methyltransferase required for the conversion of demethylmenaquinol (DMKH2) to menaquinol (MKH2) and the conversion of 2-polyprenyl-6-methoxy-1,4-benzoquinol (DDMQH2) to 2-polyprenyl-3-methyl-6-methoxy-1,4-benzoquinol (DMQH2). This Legionella pneumophila (strain Lens) protein is Ubiquinone/menaquinone biosynthesis C-methyltransferase UbiE.